A 409-amino-acid polypeptide reads, in one-letter code: Serine/threonine transporter SstT (409 aa).

A run of 8 helical transmembrane segments spans residues 24-44 (LALGIVIGSVSPQLGLAAGLF), 48-68 (FVGALKAVAPVLVFILVAATI), 82-102 (IIVLYLIGTFSAALTAVIAGM), 142-162 (AIANANYIGILAWALVLGAAL), 194-214 (LGIFGLVSSTIAETGFGALAG), 218-238 (LLAVLLGCMAFIALAVNPAIV), 292-312 (IPLGATINMAGAAITITVLAM), and 319-339 (GITVDFATALLLSLVATVSAC).

The protein belongs to the dicarboxylate/amino acid:cation symporter (DAACS) (TC 2.A.23) family.

The protein resides in the cell inner membrane. The enzyme catalyses L-serine(in) + Na(+)(in) = L-serine(out) + Na(+)(out). It catalyses the reaction L-threonine(in) + Na(+)(in) = L-threonine(out) + Na(+)(out). In terms of biological role, involved in the import of serine and threonine into the cell, with the concomitant import of sodium (symport system). The sequence is that of Serine/threonine transporter SstT from Neisseria meningitidis serogroup B (strain ATCC BAA-335 / MC58).